A 252-amino-acid polypeptide reads, in one-letter code: Ribosomal RNA small subunit methyltransferase J (252 aa).

Residues 101–102, 117–118, 153–154, and aspartate 171 each bind S-adenosyl-L-methionine; these read RD, ER, and SS.

It belongs to the methyltransferase superfamily. RsmJ family.

Its subcellular location is the cytoplasm. The catalysed reaction is guanosine(1516) in 16S rRNA + S-adenosyl-L-methionine = N(2)-methylguanosine(1516) in 16S rRNA + S-adenosyl-L-homocysteine + H(+). In terms of biological role, specifically methylates the guanosine in position 1516 of 16S rRNA. This Citrobacter koseri (strain ATCC BAA-895 / CDC 4225-83 / SGSC4696) protein is Ribosomal RNA small subunit methyltransferase J.